The sequence spans 245 residues: 14-3-3 protein zeta/delta (245 aa).

Met1 is modified (N-acetylmethionine). At Lys3 the chain carries N6-acetyllysine. The residue at position 58 (Ser58) is a Phosphoserine; by PKA. Lys68 carries the post-translational modification N6-acetyllysine. Phosphoserine is present on residues Ser184, Ser207, and Ser210. Thr232 carries the post-translational modification Phosphothreonine; by CK1.

Belongs to the 14-3-3 family. In terms of assembly, interacts with CDK16 and BSPRY. Interacts with WEE1 (C-terminal). Interacts with SAMSN1. Interacts with MLF1 (phosphorylated form); the interaction retains it in the cytoplasm. Interacts with Thr-phosphorylated ITGB2. Interacts with BCL2L11. Homodimer. Heterodimerizes with YWHAE. Homo- and heterodimerization is inhibited by phosphorylation on Ser-58. Interacts with FOXO4, NOXA1, SSH1 and ARHGEF2. Interacts with Pseudomonas aeruginosa exoS (unphosphorylated form). Interacts with BAX; the interaction occurs in the cytoplasm. Under stress conditions, MAPK8-mediated phosphorylation releases BAX to mitochondria. Interacts with phosphorylated RAF1; the interaction is inhibited when YWHAZ is phosphorylated on Thr-232. Interacts with TP53; the interaction enhances p53 transcriptional activity. The Ser-58 phosphorylated form inhibits this interaction and p53 transcriptional activity. Interacts with ABL1 (phosphorylated form); the interaction retains ABL1 in the cytoplasm. Interacts with PKA-phosphorylated AANAT; the interaction modulates AANAT enzymatic activity by increasing affinity for arylalkylamines and acetyl-CoA and protecting the enzyme from dephosphorylation and proteasomal degradation. It may also prevent thiol-dependent inactivation. Interacts with AKT1; the interaction phosphorylates YWHAZ and modulates dimerization. Interacts with GAB2 and TLK2. Interacts with the 'Thr-369' phosphorylated form of DAPK2. Interacts with PI4KB, TBC1D22A and TBC1D22B. Interacts with ZFP36L1 (via phosphorylated form); this interaction occurs in a p38 MAPK- and AKT-signaling pathways. Interacts with SLITRK1. Interacts with AK5, LDB1, MADD, MARK3, PDE1A and SMARCB1. Interacts with YWHAZ. Interacts with MEFV. Interacts with ADAM22 (via C-terminus). In terms of processing, the delta, brain-specific form differs from the zeta form in being phosphorylated. Phosphorylation on Ser-184 by MAPK8; promotes dissociation of BAX and translocation of BAX to mitochondria. Phosphorylation on Thr-232; inhibits binding of RAF1. Phosphorylated on Ser-58 by PKA and protein kinase C delta type catalytic subunit in a sphingosine-dependent fashion. Phosphorylation on Ser-58 by PKA; disrupts homodimerization and heterodimerization with YHAE and TP53. As to expression, highly expressed in brain (at protein level).

It localises to the cytoplasm. It is found in the melanosome. Adapter protein implicated in the regulation of a large spectrum of both general and specialized signaling pathways. Binds to a large number of partners, usually by recognition of a phosphoserine or phosphothreonine motif. Binding generally results in the modulation of the activity of the binding partner. Promotes cytosolic retention and inactivation of TFEB transcription factor by binding to phosphorylated TFEB. Induces ARHGEF7 activity on RAC1 as well as lamellipodia and membrane ruffle formation. In neurons, regulates spine maturation through the modulation of ARHGEF7 activity. The chain is 14-3-3 protein zeta/delta (YWHAZ) from Ovis aries (Sheep).